The following is a 67-amino-acid chain: Conotoxin TsMMSK-B021 (67 aa).

Residues 1 to 20 (MMSKLGVLLTICLLLFPLTA) form the signal peptide. Residues 21–50 (VQLDGDQPADLPELRAQDFAPERSPWFDPV) constitute a propeptide that is removed on maturation. 3 disulfides stabilise this stretch: cysteine 53/cysteine 65, cysteine 54/cysteine 61, and cysteine 58/cysteine 64. 4-hydroxyproline is present on proline 63.

Belongs to the conotoxin M superfamily. Expressed by the venom duct.

It localises to the secreted. The protein is Conotoxin TsMMSK-B021 of Conus tessulatus (Tessellate cone).